We begin with the raw amino-acid sequence, 500 residues long: Beta-glucosidase 2 (500 aa).

The signal sequence occupies residues 1-24 (MGAAAAAGFFFVLLFLSVQGGAVG). Residues glutamine 44 and histidine 144 each coordinate a beta-D-glucoside. The active-site Proton donor is the glutamate 190. An intrachain disulfide couples cysteine 209 to cysteine 218. Asparagine 222 is a glycosylation site (N-linked (GlcNAc...) asparagine). Tyrosine 334 and glutamate 403 together coordinate a beta-D-glucoside. Catalysis depends on glutamate 403, which acts as the Nucleophile. N-linked (GlcNAc...) asparagine glycosylation is present at asparagine 410. Tryptophan 445 contributes to the a beta-D-glucoside binding site.

Belongs to the glycosyl hydrolase 1 family.

It catalyses the reaction Hydrolysis of terminal, non-reducing beta-D-glucosyl residues with release of beta-D-glucose.. In Oryza sativa subsp. japonica (Rice), this protein is Beta-glucosidase 2 (BGLU2).